Reading from the N-terminus, the 825-residue chain is Probable phosphoketolase (825 aa).

It belongs to the XFP family. Thiamine diphosphate is required as a cofactor.

The polypeptide is Probable phosphoketolase (Bifidobacterium animalis subsp. lactis (strain AD011)).